The chain runs to 572 residues: Phosphoenolpyruvate-protein phosphotransferase (572 aa).

His191 serves as the catalytic Tele-phosphohistidine intermediate. 2 residues coordinate phosphoenolpyruvate: Arg298 and Arg334. Residues Glu433 and Asp457 each coordinate Mg(2+). Residues 456 to 457 (ND) and Arg467 each bind phosphoenolpyruvate. The active-site Proton donor is Cys504.

It belongs to the PEP-utilizing enzyme family. As to quaternary structure, homodimer. The cofactor is Mg(2+).

Its subcellular location is the cytoplasm. The catalysed reaction is L-histidyl-[protein] + phosphoenolpyruvate = N(pros)-phospho-L-histidyl-[protein] + pyruvate. Functionally, general (non sugar-specific) component of the phosphoenolpyruvate-dependent sugar phosphotransferase system (sugar PTS). This major carbohydrate active-transport system catalyzes the phosphorylation of incoming sugar substrates concomitantly with their translocation across the cell membrane. Enzyme I transfers the phosphoryl group from phosphoenolpyruvate (PEP) to the phosphoryl carrier protein (HPr). The polypeptide is Phosphoenolpyruvate-protein phosphotransferase (ptsI) (Staphylococcus aureus (strain COL)).